The sequence spans 85 residues: MASPLSPGSRILIGLVRAYQLVISPLLGPRCRFQPTCSHYAIEALSRFGMIKGSWLALKRVLKCHPLNPGGDDPVPPKPDDNREH.

The protein belongs to the UPF0161 family.

The protein resides in the cell inner membrane. Functionally, could be involved in insertion of integral membrane proteins into the membrane. This is Putative membrane protein insertion efficiency factor from Serratia proteamaculans (strain 568).